The primary structure comprises 505 residues: 2,3-bisphosphoglycerate-independent phosphoglycerate mutase (505 aa).

2 residues coordinate Mn(2+): D11 and S61. S61 serves as the catalytic Phosphoserine intermediate. Residues H122, 152–153 (RD), R183, R189, 259–262 (RTDR), and K332 each bind substrate. D399, H403, D440, H441, and H458 together coordinate Mn(2+).

The protein belongs to the BPG-independent phosphoglycerate mutase family. Monomer. It depends on Mn(2+) as a cofactor.

It catalyses the reaction (2R)-2-phosphoglycerate = (2R)-3-phosphoglycerate. The protein operates within carbohydrate degradation; glycolysis; pyruvate from D-glyceraldehyde 3-phosphate: step 3/5. Catalyzes the interconversion of 2-phosphoglycerate and 3-phosphoglycerate. The chain is 2,3-bisphosphoglycerate-independent phosphoglycerate mutase from Flavobacterium psychrophilum (strain ATCC 49511 / DSM 21280 / CIP 103535 / JIP02/86).